The sequence spans 132 residues: Small ribosomal subunit protein uS11 (132 aa).

Belongs to the universal ribosomal protein uS11 family. Part of the 30S ribosomal subunit. Interacts with proteins S7 and S18. Binds to IF-3.

Its function is as follows. Located on the platform of the 30S subunit, it bridges several disparate RNA helices of the 16S rRNA. Forms part of the Shine-Dalgarno cleft in the 70S ribosome. This chain is Small ribosomal subunit protein uS11, found in Chlamydia muridarum (strain MoPn / Nigg).